The following is a 362-amino-acid chain: UDP-N-acetylglucosamine--N-acetylmuramyl-(pentapeptide) pyrophosphoryl-undecaprenol N-acetylglucosamine transferase (362 aa).

Residues 21–23 (TGG), Asn129, Arg170, Ser198, and Gln290 each bind UDP-N-acetyl-alpha-D-glucosamine.

The protein belongs to the glycosyltransferase 28 family. MurG subfamily.

It is found in the cell inner membrane. It carries out the reaction di-trans,octa-cis-undecaprenyl diphospho-N-acetyl-alpha-D-muramoyl-L-alanyl-D-glutamyl-meso-2,6-diaminopimeloyl-D-alanyl-D-alanine + UDP-N-acetyl-alpha-D-glucosamine = di-trans,octa-cis-undecaprenyl diphospho-[N-acetyl-alpha-D-glucosaminyl-(1-&gt;4)]-N-acetyl-alpha-D-muramoyl-L-alanyl-D-glutamyl-meso-2,6-diaminopimeloyl-D-alanyl-D-alanine + UDP + H(+). Its pathway is cell wall biogenesis; peptidoglycan biosynthesis. In terms of biological role, cell wall formation. Catalyzes the transfer of a GlcNAc subunit on undecaprenyl-pyrophosphoryl-MurNAc-pentapeptide (lipid intermediate I) to form undecaprenyl-pyrophosphoryl-MurNAc-(pentapeptide)GlcNAc (lipid intermediate II). The sequence is that of UDP-N-acetylglucosamine--N-acetylmuramyl-(pentapeptide) pyrophosphoryl-undecaprenol N-acetylglucosamine transferase from Synechococcus sp. (strain JA-3-3Ab) (Cyanobacteria bacterium Yellowstone A-Prime).